We begin with the raw amino-acid sequence, 336 residues long: DNA polymerase III subunit delta' (336 aa).

In terms of assembly, DNA polymerase III contains a core (composed of alpha, epsilon and theta chains) that associates with a tau subunit. This core dimerizes to form the POLIII' complex. PolIII' associates with the gamma complex (composed of gamma, delta, delta', psi and chi chains) and with the beta chain to form the complete DNA polymerase III complex.

It catalyses the reaction DNA(n) + a 2'-deoxyribonucleoside 5'-triphosphate = DNA(n+1) + diphosphate. DNA polymerase III is a complex, multichain enzyme responsible for most of the replicative synthesis in bacteria. This DNA polymerase also exhibits 3' to 5' exonuclease activity. The protein is DNA polymerase III subunit delta' (holB) of Buchnera aphidicola subsp. Baizongia pistaciae (strain Bp).